Consider the following 279-residue polypeptide: Protoheme IX farnesyltransferase (279 aa).

The next 9 helical transmembrane spans lie at 1–21 (MIKP…FFLA), 29–49 (IFFL…CILN), 79–99 (ILFF…YIYI), 101–121 (FLCT…YSYL), 128–148 (FSTF…YVAV), 156–176 (CTIL…SIII), 200–220 (IIFI…LYFF), 225–245 (FFYF…SFLS), and 254–274 (IWSR…SFLM).

The protein belongs to the UbiA prenyltransferase family. Protoheme IX farnesyltransferase subfamily.

The protein localises to the cell membrane. It carries out the reaction heme b + (2E,6E)-farnesyl diphosphate + H2O = Fe(II)-heme o + diphosphate. Its pathway is porphyrin-containing compound metabolism; heme O biosynthesis; heme O from protoheme: step 1/1. In terms of biological role, converts heme B (protoheme IX) to heme O by substitution of the vinyl group on carbon 2 of heme B porphyrin ring with a hydroxyethyl farnesyl side group. This is Protoheme IX farnesyltransferase from Buchnera aphidicola subsp. Cinara cedri (strain Cc).